The primary structure comprises 148 residues: Putative nickel-responsive regulator (148 aa).

Positions 88, 99, 101, and 107 each coordinate Ni(2+).

The protein belongs to the transcriptional regulatory CopG/NikR family. The cofactor is Ni(2+).

In terms of biological role, transcriptional regulator. This chain is Putative nickel-responsive regulator, found in Helicobacter acinonychis (strain Sheeba).